Here is a 252-residue protein sequence, read N- to C-terminus: Ubiquitin carboxyl-terminal hydrolase isozyme L1 (252 aa).

At methionine 1 the chain carries N-acetylmethionine. Positions 2-250 (QLKPMEINPE…VRFSAVALCK (249 aa)) constitute a UCH catalytic domain. The tract at residues 5 to 10 (PMEINP) is interaction with ubiquitin. The Nucleophile role is filled by cysteine 119. Serine 154 carries the phosphoserine modification. Catalysis depends on histidine 190, which acts as the Proton donor. Residues 240 to 245 (EVRFSA) form an interaction with ubiquitin region. Cysteine 249 carries S-farnesyl cysteine lipidation. Positions 250–252 (KAA) are cleaved as a propeptide — removed in mature form.

Belongs to the peptidase C12 family. As to quaternary structure, monomer. Homodimer. Interacts with COPS5 and SNCA. O-glycosylated. As to expression, neurons and cells of the diffuse neuroendocrine system and their tumors.

The protein resides in the cytoplasm. Its subcellular location is the endoplasmic reticulum membrane. The catalysed reaction is Thiol-dependent hydrolysis of ester, thioester, amide, peptide and isopeptide bonds formed by the C-terminal Gly of ubiquitin (a 76-residue protein attached to proteins as an intracellular targeting signal).. Its function is as follows. Ubiquitin-protein hydrolase involved both in the processing of ubiquitin precursors and of ubiquitinated proteins. This enzyme is a thiol protease that recognizes and hydrolyzes a peptide bond at the C-terminal glycine of ubiquitin. Also binds to free monoubiquitin and may prevent its degradation in lysosomes. The homodimer may have ATP-independent ubiquitin ligase activity. The polypeptide is Ubiquitin carboxyl-terminal hydrolase isozyme L1 (UCHL1) (Bos taurus (Bovine)).